A 147-amino-acid polypeptide reads, in one-letter code: Globin (147 aa).

One can recognise a Globin domain in the interval 1–147; sequence GLDGAQKTAL…LLTMLIKAHV (147 aa). Heme b is bound by residues His-66 and His-98.

This sequence belongs to the globin family. In terms of assembly, homodimer.

The protein localises to the cytoplasm. The chain is Globin from Busycotypus canaliculatus (Channeled whelk).